We begin with the raw amino-acid sequence, 369 residues long: Variable large protein 7 (369 aa).

The N-terminal stretch at 1–26 (MRKRISAIINKLNISIIIMTVVLMIG) is a signal peptide. Cysteine 27 is lipidated: N-palmitoyl cysteine. Cysteine 27 is lipidated: S-diacylglycerol cysteine.

This sequence belongs to the variable large protein (Vlp) family. Alpha subfamily.

It localises to the cell outer membrane. Its function is as follows. The Vlp and Vsp proteins are antigenically distinct proteins, only one vlp or vsp gene is transcriptionally active at any one time. Switching between these genes is a mechanism of host immune response evasion. In Borrelia hermsii, this protein is Variable large protein 7.